The chain runs to 902 residues: Glutamate receptor 4 (902 aa).

The first 20 residues, 1 to 20, serve as a signal peptide directing secretion; it reads MRIICRQIVLLFSGFWGLAM. Over 22 to 544 the chain is Extracellular; it reads AFPSSVQIGG…GVFSFLDPLA (523 aa). 6 N-linked (GlcNAc...) asparagine glycosylation sites follow: N52, N56, N258, N371, N407, and N414. C84 and C331 are joined by a disulfide. L-glutamate-binding residues include P500, T502, and R507. Residues 545 to 565 form a helical membrane-spanning segment; it reads YEIWMCIVFAYIGVSVVLFLV. Topologically, residues 566–592 are cytoplasmic; that stretch reads SRFSPYEWHTEEPEDGKEGPSDQPPNE. The segment at residues 593–608 is an intramembrane region (helical; Pore-forming); it reads FGIFNSLWFSLGAFMQ. An intramembrane segment occupies 609 to 611; that stretch reads QGC. C611 carries S-palmitoyl cysteine lipidation. Residues 612–617 are Cytoplasmic-facing; it reads DISPRS. A helical transmembrane segment spans residues 618-638; it reads LSGRIVGGVWWFFTLIIISSY. Residues 639 to 813 are Extracellular-facing; sequence TANLAAFLTV…DKTSALSLSN (175 aa). Residues S676, T677, and E727 each coordinate L-glutamate. A disulfide bond links C740 and C795. A helical membrane pass occupies residues 814-834; sequence VAGVFYILVGGLGLAMLVALI. The Cytoplasmic segment spans residues 835-902; that stretch reads EFCYKSRAEA…GLAVIASDLP (68 aa). Residue C837 is the site of S-palmitoyl cysteine attachment. S862 carries the phosphoserine; by PKC/PRKCG modification.

Belongs to the glutamate-gated ion channel (TC 1.A.10.1) family. GRIA4 subfamily. Homotetramer or heterotetramer of pore-forming glutamate receptor subunits. Tetramers may be formed by the dimerization of dimers. Interacts with EPB41L1 via its C-terminus. Isoform 3 interacts with PICK1. Found in a complex with GRIA1, GRIA2, GRIA3, CNIH2, CNIH3, CACNG2, CACNG3, CACNG4, CACNG5, CACNG7 and CACNG8. Interacts with CACNG5 and PRKCG. Found in a complex with GRIA1, GRIA2, GRIA3, DLG4, CACNG8 and CNIH2. Post-translationally, palmitoylated. Depalmitoylated upon L-glutamate stimulation. ZDHHC3/GODZ specifically palmitoylates Cys-611, which leads to Golgi retention and decreased cell surface expression. In contrast, Cys-837 palmitoylation does not affect cell surface expression but regulates stimulation-dependent endocytosis. In terms of processing, phosphorylated at Ser-862 by PRKCG; phosphorylation increases plasma membrane-associated GRI4 expression. Detected in cerebellum.

The protein localises to the cell membrane. It localises to the postsynaptic cell membrane. Its subcellular location is the cell projection. It is found in the dendrite. It carries out the reaction Ca(2+)(in) = Ca(2+)(out). The catalysed reaction is Na(+)(in) = Na(+)(out). The enzyme catalyses Mg(2+)(in) = Mg(2+)(out). Ionotropic glutamate receptor that functions as a ligand-gated cation channel, gated by L-glutamate and glutamatergic agonists such as alpha-amino-3-hydroxy-5-methyl-4-isoxazolepropionic acid (AMPA), quisqualic acid, and kainic acid. L-glutamate acts as an excitatory neurotransmitter at many synapses in the central nervous system and plays an important role in fast excitatory synaptic transmission. Binding of the excitatory neurotransmitter L-glutamate induces a conformation change, leading to the opening of the cation channel, and thereby converts the chemical signal to an electrical impulse upon entry of monovalent and divalent cations such as sodium and calcium. The receptor then desensitizes rapidly and enters a transient inactive state, characterized by the presence of bound agonist. In the presence of CACNG8, shows resensitization which is characterized by a delayed accumulation of current flux upon continued application of L-glutamate. The sequence is that of Glutamate receptor 4 from Rattus norvegicus (Rat).